The sequence spans 144 residues: Large ribosomal subunit protein uL16 (144 aa).

This sequence belongs to the universal ribosomal protein uL16 family. Part of the 50S ribosomal subunit.

Functionally, binds 23S rRNA and is also seen to make contacts with the A and possibly P site tRNAs. The polypeptide is Large ribosomal subunit protein uL16 (Bacillus mycoides (strain KBAB4) (Bacillus weihenstephanensis)).